We begin with the raw amino-acid sequence, 205 residues long: ESCRT-related protein CHMP1 (205 aa).

Coiled coils occupy residues 13–51 (DLKFTSKSLQRQARKCEKEEKEQKLKVKKAIEKGNMDGA) and 109–140 (GNLQKMSETMDNFERQFVNMEVQAEFMEGAMA).

Belongs to the SNF7 family.

The protein resides in the cytoplasm. The protein localises to the endosome membrane. In terms of biological role, involved in ESCRT-dependent multivesicular body (MVB) formation and sorting of endosomal cargo proteins into MVBs. This Oryza sativa subsp. japonica (Rice) protein is ESCRT-related protein CHMP1.